The primary structure comprises 268 residues: Undecaprenyl-diphosphatase (268 aa).

7 helical membrane-spanning segments follow: residues 41–61 (LAYS…LIYF), 81–101 (WLTY…PLYM), 106–126 (YLLL…AVIF), 146–166 (MTLG…LPGI), 191–211 (FVLV…SEGG), 213–233 (VATP…LVTI), and 245–265 (VTLV…TRIL).

Belongs to the UppP family.

The protein resides in the cell membrane. It catalyses the reaction di-trans,octa-cis-undecaprenyl diphosphate + H2O = di-trans,octa-cis-undecaprenyl phosphate + phosphate + H(+). Catalyzes the dephosphorylation of undecaprenyl diphosphate (UPP). The sequence is that of Undecaprenyl-diphosphatase from Pyrobaculum islandicum (strain DSM 4184 / JCM 9189 / GEO3).